The primary structure comprises 345 residues: ATP-dependent (S)-NAD(P)H-hydrate dehydratase (345 aa).

Residues 9 to 332 (ILSLARSMIP…DMVGEVYEEV (324 aa)) enclose the YjeF C-terminal domain. Residues G113 and 170 to 176 (NVMEFKR) contribute to the (6S)-NADPHX site. ATP-binding positions include 208-212 (KGPSD) and 241-250 (GGLKRVGGQG). Position 251 (D251) interacts with (6S)-NADPHX.

The protein belongs to the NnrD/CARKD family. Requires Mg(2+) as cofactor.

The protein localises to the cytoplasm. It carries out the reaction (6S)-NADHX + ATP = ADP + phosphate + NADH + H(+). The enzyme catalyses (6S)-NADPHX + ATP = ADP + phosphate + NADPH + H(+). In terms of biological role, catalyzes the dehydration of the S-form of NAD(P)HX at the expense of ATP, which is converted to ADP. Together with NAD(P)HX epimerase, which catalyzes the epimerization of the S- and R-forms, the enzyme allows the repair of both epimers of NAD(P)HX, a damaged form of NAD(P)H that is a result of enzymatic or heat-dependent hydration. The chain is ATP-dependent (S)-NAD(P)H-hydrate dehydratase from Cryptococcus neoformans var. neoformans serotype D (strain JEC21 / ATCC MYA-565) (Filobasidiella neoformans).